The chain runs to 600 residues: Novobiocin biosynthesis protein H (600 aa).

The segment at 505–526 (GGKTDRAGLPDPVKATQPAGLG) is disordered. One can recognise a Carrier domain in the interval 526 to 600 (GPRTPAEKVL…QLAAIATLEE (75 aa)). Position 561 is an O-(pantetheine 4'-phosphoryl)serine (S561).

The protein belongs to the ATP-dependent AMP-binding enzyme family.

It functions in the pathway antibiotic biosynthesis; novobiocin biosynthesis. Its function is as follows. Together with NovI, involved in the formation of a beta-OH-Tyr intermediate in the novobiocin biosynthesis pathway, an aminocoumarin family antibiotic that targets bacterial DNA gyrases. The ATP-dependent AMP-binding region activates L-Tyr as L-tyrosyl-AMP and then transfers the L-tyrosyl group to the acyl carrier domain through thioester formation to form a tyrosyl-S intermediate that is covalently tethered to NovH (L-Tyr-S-NovH). The protein is Novobiocin biosynthesis protein H (novH) of Streptomyces niveus (Streptomyces spheroides).